A 356-amino-acid chain; its full sequence is Holliday junction branch migration complex subunit RuvB (356 aa).

Residues 4–191 are large ATPase domain (RuvB-L); that stretch reads TDKLATEQRI…FGIVARLEFY (188 aa). Residues leucine 30, arginine 31, glycine 72, lysine 75, threonine 76, threonine 77, 138–140, arginine 181, tyrosine 191, and arginine 228 each bind ATP; that span reads EDY. A Mg(2+)-binding site is contributed by threonine 76. The interval 192-262 is small ATPAse domain (RuvB-S); that stretch reads DAEQLSRIVR…VADAALAMLD (71 aa). A head domain (RuvB-H) region spans residues 265–356; the sequence is PVGFDLMDRK…RDEWDTPDGK (92 aa). Arginine 301, arginine 320, and arginine 325 together coordinate DNA.

This sequence belongs to the RuvB family. Homohexamer. Forms an RuvA(8)-RuvB(12)-Holliday junction (HJ) complex. HJ DNA is sandwiched between 2 RuvA tetramers; dsDNA enters through RuvA and exits via RuvB. An RuvB hexamer assembles on each DNA strand where it exits the tetramer. Each RuvB hexamer is contacted by two RuvA subunits (via domain III) on 2 adjacent RuvB subunits; this complex drives branch migration. In the full resolvosome a probable DNA-RuvA(4)-RuvB(12)-RuvC(2) complex forms which resolves the HJ.

It is found in the cytoplasm. The enzyme catalyses ATP + H2O = ADP + phosphate + H(+). Functionally, the RuvA-RuvB-RuvC complex processes Holliday junction (HJ) DNA during genetic recombination and DNA repair, while the RuvA-RuvB complex plays an important role in the rescue of blocked DNA replication forks via replication fork reversal (RFR). RuvA specifically binds to HJ cruciform DNA, conferring on it an open structure. The RuvB hexamer acts as an ATP-dependent pump, pulling dsDNA into and through the RuvAB complex. RuvB forms 2 homohexamers on either side of HJ DNA bound by 1 or 2 RuvA tetramers; 4 subunits per hexamer contact DNA at a time. Coordinated motions by a converter formed by DNA-disengaged RuvB subunits stimulates ATP hydrolysis and nucleotide exchange. Immobilization of the converter enables RuvB to convert the ATP-contained energy into a lever motion, pulling 2 nucleotides of DNA out of the RuvA tetramer per ATP hydrolyzed, thus driving DNA branch migration. The RuvB motors rotate together with the DNA substrate, which together with the progressing nucleotide cycle form the mechanistic basis for DNA recombination by continuous HJ branch migration. Branch migration allows RuvC to scan DNA until it finds its consensus sequence, where it cleaves and resolves cruciform DNA. The protein is Holliday junction branch migration complex subunit RuvB of Burkholderia cenocepacia (strain HI2424).